We begin with the raw amino-acid sequence, 901 residues long: Viral-enhancing factor (901 aa).

The 304-residue stretch at 27–330 folds into the Peptidase M60 domain; that stretch reads HRRTEVGVVL…IFTWLYNPQR (304 aa). N-linked (GlcNAc...) asparagine; by host glycosylation is found at Asn-265, Asn-278, Asn-339, Asn-349, Asn-540, Asn-594, Asn-595, Asn-642, Asn-683, and Asn-698.

In terms of biological role, involved in disruption of the peritrophic membrane and fusion of nucleocapsids with midgut cells. The protein is Viral-enhancing factor (VEF) of Pseudalatia unipuncta granulosis virus (PuGV).